The sequence spans 495 residues: NADH-ubiquinone oxidoreductase chain 4 (495 aa).

The next 14 membrane-spanning stretches (helical) occupy residues 9 to 29 (YSNL…ILVI), 37 to 57 (IRGI…FFWI), 89 to 109 (ISLF…LVGF), 118 to 138 (EYMI…CSLD), 139 to 159 (LLIF…IIGV), 173 to 193 (FFLY…FIFF), 214 to 234 (ILLW…VPVH), 245 to 265 (PTAG…YGFL), 272 to 292 (FPEA…IAII), 307 to 327 (IIAY…FSLN), 335 to 355 (ILLM…VGAL), 367 to 387 (YGGL…FTLA), 413 to 433 (LVAT…LWLY), and 457 to 477 (VLIF…PEVF).

The protein belongs to the complex I subunit 4 family.

The protein resides in the mitochondrion membrane. It carries out the reaction a ubiquinone + NADH + 5 H(+)(in) = a ubiquinol + NAD(+) + 4 H(+)(out). Its function is as follows. Core subunit of the mitochondrial membrane respiratory chain NADH dehydrogenase (Complex I) that is believed to belong to the minimal assembly required for catalysis. Complex I functions in the transfer of electrons from NADH to the respiratory chain. The immediate electron acceptor for the enzyme is believed to be ubiquinone. In Marchantia polymorpha (Common liverwort), this protein is NADH-ubiquinone oxidoreductase chain 4 (ND4).